We begin with the raw amino-acid sequence, 303 residues long: Protease HtpX (303 aa).

The next 2 membrane-spanning stretches (helical) occupy residues 4 to 24 (IGLF…VFGI) and 42 to 62 (IASL…ISLF). His149 is a Zn(2+) binding site. The active site involves Glu150. Residue His153 participates in Zn(2+) binding. The next 2 membrane-spanning stretches (helical) occupy residues 157 to 177 (GDMV…MFFA) and 200 to 220 (FVTS…IVMW). Glu226 is a binding site for Zn(2+).

This sequence belongs to the peptidase M48B family. Zn(2+) serves as cofactor.

Its subcellular location is the cell inner membrane. This Psychrobacter sp. (strain PRwf-1) protein is Protease HtpX.